A 200-amino-acid chain; its full sequence is Prolactin-2 (200 aa).

The N-terminal stretch at 1–23 (MRQRRISGSNLMMVLCVVAMCRA) is a signal peptide. Intrachain disulfides connect Cys-64–Cys-173 and Cys-190–Cys-200.

It belongs to the somatotropin/prolactin family.

It localises to the secreted. The chain is Prolactin-2 (prl2) from Oreochromis mossambicus (Mozambique tilapia).